Consider the following 403-residue polypeptide: Cystinosin homolog (403 aa).

The Lumenal segment spans residues 1–122; that stretch reads MKLPVSILFF…YSRITVIRSH (122 aa). 4 N-linked (GlcNAc...) asparagine glycosylation sites follow: asparagine 45, asparagine 52, asparagine 78, and asparagine 96. The helical transmembrane segment at 123 to 143 threads the bilayer; that stretch reads WLAILIQIVGWTYFAAWSVSF. Residues 124 to 190 form the PQ-loop 1 domain; that stretch reads LAILIQIVGW…MYYNSHVKNI (67 aa). At 144-162 the chain is on the cytoplasmic side; sequence YPQMYLNFKRKSVVGLNFD. A helical transmembrane segment spans residues 163 to 183; the sequence is FLSLNLVGFGAYAMFNLLMYY. The Lumenal segment spans residues 184–206; it reads NSHVKNIYSMENPRSPPPVLLND. The helical transmembrane segment at 207 to 227 threads the bilayer; the sequence is VVFAVHAFLACFVTILQCIFY. The Cytoplasmic segment spans residues 228–237; that stretch reads ERDQQRISTK. The helical transmembrane segment at 238–258 threads the bilayer; it reads CIILIIGLVSFGFVSVVVTVL. At 259-260 the chain is on the lumenal side; the sequence is NK. Residues 261–283 traverse the membrane as a helical segment; that stretch reads ITILDFVVSLSYIKMAVTCCKYF. A PQ-loop 2 domain is found at 266–326; the sequence is FVVSLSYIKM…MVLQAINVND (61 aa). Residues 284–294 lie on the Cytoplasmic side of the membrane; it reads PQAYFNYQRKS. Residues 295 to 315 form a helical membrane-spanning segment; it reads TVGWSIGNILLDFTGGSLDIL. The Lumenal portion of the chain corresponds to 316 to 336; sequence QMVLQAINVNDWSAFYANPVK. The chain crosses the membrane as a helical span at residues 337 to 357; that stretch reads FGLGFVSIFFDIIFMIQHYAL. Topologically, residues 358-403 are cytoplasmic; sequence YPDAEVPHNEYHGVDNPDPDSIVRDAEHGAADNESMESTDPIIVHD. The segment covering 374–388 has biased composition (basic and acidic residues); that stretch reads PDPDSIVRDAEHGAA. A disordered region spans residues 374-403; that stretch reads PDPDSIVRDAEHGAADNESMESTDPIIVHD.

The protein belongs to the cystinosin family.

The protein localises to the lysosome membrane. The protein resides in the cytoplasmic vesicle. It localises to the phagosome. The catalysed reaction is L-cystine(out) + H(+)(out) = L-cystine(in) + H(+)(in). Cystine/H(+) symporter that mediates export of cystine, the oxidized dimer of cysteine, from lysosomes. May play a role in the degradation of engulfed apoptotic cells. This chain is Cystinosin homolog (ctns-1), found in Caenorhabditis briggsae.